Reading from the N-terminus, the 1137-residue chain is Receptor-type guanylate cyclase gcy-1 (1137 aa).

The N-terminal stretch at 1-18 (MQIFTILLLFNIFPSIFV) is a signal peptide. Topologically, residues 19-494 (QNLPDTTVAP…CPVSFWEQYK (476 aa)) are extracellular. 6 N-linked (GlcNAc...) asparagine glycosylation sites follow: Asn219, Asn348, Asn358, Asn384, Asn417, and Asn451. Residues 495-515 (ILIFVAIAVIVLMVLIMIIGC) form a helical membrane-spanning segment. The Cytoplasmic portion of the chain corresponds to 516–1137 (LCVISGKRAE…FKMDTLKVAN (622 aa)). In terms of domain architecture, Protein kinase spans 557-826 (LQSAPSISTG…ENICSQMKGL (270 aa)). A coiled-coil region spans residues 840-871 (NMLEEYTSTLEEEIEERTKELTLEKKKADILL). One can recognise a Guanylate cyclase domain in the interval 898-1028 (TVFFSDVVKF…DTVNTASRME (131 aa)). The segment at 1086 to 1122 (ELRSISNRSTPPVTNDRWIPNPSSSHGSRPSSVYDPL) is disordered. The span at 1088–1098 (RSISNRSTPPV) shows a compositional bias: polar residues. Residues 1105-1117 (PNPSSSHGSRPSS) show a composition bias toward low complexity.

Belongs to the adenylyl cyclase class-4/guanylyl cyclase family. As to expression, expressed predominantly in sensory neurons. Expressed asymmetrically in the right ASE (ASER) neuron and bilaterally in ASI and URX neurons. Expressed in PVT and bilaterally in AIY non-sensory neurons. Expressed in intestine.

The protein resides in the membrane. It catalyses the reaction GTP = 3',5'-cyclic GMP + diphosphate. Functionally, guanylate cyclase involved in the production of the second messenger cGMP. Involved in the sensing of K+ gradient by the ASE right (ASER) sensory neuron. This chain is Receptor-type guanylate cyclase gcy-1 (gcy-1), found in Caenorhabditis elegans.